The primary structure comprises 312 residues: Aspartate carbamoyltransferase catalytic subunit (312 aa).

Residues Arg58 and Thr59 each contribute to the carbamoyl phosphate site. Position 86 (Lys86) interacts with L-aspartate. Residues Arg108, His136, and Gln139 each contribute to the carbamoyl phosphate site. Residues Arg169 and Arg223 each coordinate L-aspartate. Carbamoyl phosphate contacts are provided by Gly264 and Pro265.

This sequence belongs to the aspartate/ornithine carbamoyltransferase superfamily. ATCase family. Heterododecamer (2C3:3R2) of six catalytic PyrB chains organized as two trimers (C3), and six regulatory PyrI chains organized as three dimers (R2).

It catalyses the reaction carbamoyl phosphate + L-aspartate = N-carbamoyl-L-aspartate + phosphate + H(+). The protein operates within pyrimidine metabolism; UMP biosynthesis via de novo pathway; (S)-dihydroorotate from bicarbonate: step 2/3. Its function is as follows. Catalyzes the condensation of carbamoyl phosphate and aspartate to form carbamoyl aspartate and inorganic phosphate, the committed step in the de novo pyrimidine nucleotide biosynthesis pathway. In Acetivibrio thermocellus (strain ATCC 27405 / DSM 1237 / JCM 9322 / NBRC 103400 / NCIMB 10682 / NRRL B-4536 / VPI 7372) (Clostridium thermocellum), this protein is Aspartate carbamoyltransferase catalytic subunit.